We begin with the raw amino-acid sequence, 86 residues long: Large ribosomal subunit protein bL27 (86 aa).

The protein belongs to the bacterial ribosomal protein bL27 family.

The protein is Large ribosomal subunit protein bL27 of Flavobacterium psychrophilum (strain ATCC 49511 / DSM 21280 / CIP 103535 / JIP02/86).